We begin with the raw amino-acid sequence, 560 residues long: Oxygen-dependent choline dehydrogenase (560 aa).

6 to 35 is a binding site for FAD; that stretch reads DYIIVGAGSAGCVLADRLSESGDHSVLLLE. Catalysis depends on H470, which acts as the Proton acceptor.

This sequence belongs to the GMC oxidoreductase family. The cofactor is FAD.

It catalyses the reaction choline + A = betaine aldehyde + AH2. The enzyme catalyses betaine aldehyde + NAD(+) + H2O = glycine betaine + NADH + 2 H(+). The protein operates within amine and polyamine biosynthesis; betaine biosynthesis via choline pathway; betaine aldehyde from choline (cytochrome c reductase route): step 1/1. Functionally, involved in the biosynthesis of the osmoprotectant glycine betaine. Catalyzes the oxidation of choline to betaine aldehyde and betaine aldehyde to glycine betaine at the same rate. This is Oxygen-dependent choline dehydrogenase from Vibrio vulnificus (strain YJ016).